We begin with the raw amino-acid sequence, 438 residues long: ATP phosphoribosyltransferase regulatory subunit (438 aa).

The protein belongs to the class-II aminoacyl-tRNA synthetase family. HisZ subfamily. In terms of assembly, heteromultimer composed of HisG and HisZ subunits.

It localises to the cytoplasm. It participates in amino-acid biosynthesis; L-histidine biosynthesis; L-histidine from 5-phospho-alpha-D-ribose 1-diphosphate: step 1/9. Functionally, required for the first step of histidine biosynthesis. May allow the feedback regulation of ATP phosphoribosyltransferase activity by histidine. The polypeptide is ATP phosphoribosyltransferase regulatory subunit (Geobacter sulfurreducens (strain ATCC 51573 / DSM 12127 / PCA)).